The primary structure comprises 426 residues: Glutamate-1-semialdehyde 2,1-aminomutase (426 aa).

Lys-265 is modified (N6-(pyridoxal phosphate)lysine).

It belongs to the class-III pyridoxal-phosphate-dependent aminotransferase family. HemL subfamily. In terms of assembly, homodimer. Requires pyridoxal 5'-phosphate as cofactor.

Its subcellular location is the cytoplasm. The catalysed reaction is (S)-4-amino-5-oxopentanoate = 5-aminolevulinate. It functions in the pathway porphyrin-containing compound metabolism; protoporphyrin-IX biosynthesis; 5-aminolevulinate from L-glutamyl-tRNA(Glu): step 2/2. The chain is Glutamate-1-semialdehyde 2,1-aminomutase from Escherichia coli O127:H6 (strain E2348/69 / EPEC).